A 179-amino-acid chain; its full sequence is MGLTISKLFASLLGRREMRILMVGLDAAGKTTILYKLKLGEIVTTIPTIGFNVETVEYKNISFTVWDVGGQDKIRPLWRYYFQNTQGIIFVVDSNDRDRINEAREELQSMLNEDELKDAVLLVLANKQDLPNAMNAAEITEKMGLHSIRNRPWFIQATCATTGDGLYEGLEWLSNQVGK.

The N-myristoyl glycine moiety is linked to residue Gly2. Residues 24-31 (GLDAAGKT), 67-71 (DVGGQ), and 126-129 (NKQD) each bind GTP.

The protein belongs to the small GTPase superfamily. Arf family.

The protein resides in the golgi apparatus. In terms of biological role, GTP-binding protein involved in protein trafficking; may modulate vesicle budding and uncoating within the Golgi apparatus. In Candida albicans (strain SC5314 / ATCC MYA-2876) (Yeast), this protein is ADP-ribosylation factor (ARF1).